A 65-amino-acid polypeptide reads, in one-letter code: Defensin-B3 (65 aa).

An N-terminal signal peptide occupies residues 1-21 (MRLLLVFFFLSLLDQAPPARS). Cystine bridges form between cysteine 29–cysteine 58, cysteine 36–cysteine 50, and cysteine 40–cysteine 59. The propeptide occupies 62–65 (ESPR).

This sequence belongs to the beta-defensin family. Lowly expressed in spleen, and expressed at lower levels in kidney, lung and testis.

The protein localises to the secreted. Has antimicrobial activity. This is Defensin-B3 from Ornithorhynchus anatinus (Duckbill platypus).